The sequence spans 728 residues: Plakophilin-1 (728 aa).

Residues 1-235 form a required for binding to single stranded DNA region; the sequence is MNHSPLKTAL…SFGHSRASSK (235 aa). The segment at 1–287 is required for interaction with EIF4A1; it reads MNHSPLKTAL…ESAKQQVYQL (287 aa). At serine 4 the chain carries Phosphoserine; by RIPK4. The disordered stretch occupies residues 48–69; sequence TVKRQKSKSSQSSTLSHSNRGS. 2 phosphorylation in this region is required for cytoplasmic localization and protein stabilization regions span residues 54-69 and 117-192; these read SKSS…NRGS and RFSS…STCS. Phosphoserine is present on serine 119. Serine 120 carries the phosphoserine; by RIPK4 modification. A Phosphoserine modification is found at serine 122. Serine 143 carries the post-translational modification Phosphoserine; by RIPK4. The required for WNT-mediated nuclear localization stretch occupies residues 161-270; it reads YCDPRGTLRK…KYQAIGAYYI (110 aa). ARM repeat units follow at residues 244–275, 276–317, 318–360, 361–412, 413–443, 505–536, 537–583, 584–629, and 630–694; these read SGLT…HTCF, QDES…NLVF, RSTP…NLSS, TDEL…GCLR, NLSS…NCVA, NYDC…LNLM, GKSK…IARL, LQSG…SHTG, and NTSN…DMWA.

It belongs to the beta-catenin family. As to quaternary structure, part of a complex that contains DSG3, PKP1, YAP1 and YWHAG; the complex is required for localization of DSG3 and YAP1 to the cell membrane in keratinocytes. Interacts (via N-terminus) with KRT5/CK5, KRT8/CK8 (via rod domain), KRT15/CK15 and KRT18/CK18 (via rod domain) as part of intermediate filaments. Interacts with VIM (via rod domain). Interacts with DSP. Interacts with DES. Interacts with FXR1; the interaction may facilitate the binding of PKP1 to PKP2, PKP3 and DSP mRNA. Interacts (via N-terminus) with EIF4A1; the interaction promotes EIF4A1 recruitment to the cap-dependent translation complex and EIF4A1 ATPase activity. Interacts with TJP1/ZO-1; the interaction facilitates TJP1/ZO-1 localization to the plasma membrane. Interacts (when phosphorylated) with YWHAG; the interaction results in translocation of PKP1 to the cytoplasm and loss of intercellular adhesion in keratinocytes. Post-translationally, phosphorylated by AKT2; required for interaction with YWHAG and subsequent localization away from desmosomes to the cytoplasm. Phosphorylation of Ser-119 by AKT2 promotes PKP1-driven cap-dependent mRNA translation and decreases intercellular adhesion, phosphorylation is promoted by insulin. Phosphorylation by RIPK4 at the N-terminus is required for its role in differentiation of keratinocytes and DSG1 localization at cell junctions. As to expression, expressed in undifferentiated keratinocytes of the epidermis at birth, expression increases as differentiation proceeds (at protein level). Expressed in the cervical loop during early tooth differentiation, expression is then present between ameloblasts, at ameloblast-ameloblast junctions and in the stratum intermedium during pre-secretory and secretory stages of tooth development (at protein level).

The protein localises to the nucleus. It localises to the cytoplasm. The protein resides in the perinuclear region. It is found in the cell junction. Its subcellular location is the desmosome. The protein localises to the cell membrane. It localises to the stress granule. In terms of biological role, a component of desmosome cell-cell junctions which are required for positive regulation of cellular adhesion. Plays a role in desmosome protein expression regulation and localization to the desmosomal plaque, thereby maintaining cell sheet integrity and anchorage of desmosomes to intermediate filaments. Required for localization of DSG3 and YAP1 to the cell membrane in keratinocytes in response to mechanical strain, via the formation of an interaction complex composed of DSG3, YAP1, PKP1 and YWHAG. Positively regulates differentiation of keratinocytes, potentially via promoting localization of DSG1 at desmosome cell junctions. Required for calcium-independent development and maturation of desmosome plaques specifically at lateral cell-cell contacts in differentiating keratinocytes. Plays a role in the maintenance of DSG3 protein abundance, DSG3 clustering and localization of these clusters to the cell membrane in keratinocytes. May also promote keratinocyte proliferation and morphogenesis during postnatal development. Required for tight junction inside-out transepidermal barrier function of the skin, and is thereby involved in neonatal survival possibly via maintenance of hydration levels. Promotes Wnt-mediated proliferation and differentiation of ameloblasts, via facilitating TJP1/ZO-1 localization to tight junctions. Binds single-stranded DNA (ssDNA), and may thereby play a role in sensing DNA damage and promoting cell survival. Positively regulates cap-dependent translation and as a result cell proliferation, via recruitment of EIF4A1 to the initiation complex and promotion of EIF4A1 ATPase activity. Regulates the mRNA stability and protein abundance of desmosome components PKP2, PKP3, DSC2 and DSP, potentially via its interaction with FXR1. This Mus musculus (Mouse) protein is Plakophilin-1 (Pkp1).